A 229-amino-acid polypeptide reads, in one-letter code: Transcriptional activator protein YukR (229 aa).

The 66-residue stretch at 157–222 (DTSGKGILSP…QAIRLGVELE (66 aa)) folds into the HTH luxR-type domain. The segment at residues 181 to 200 (YPEIALIAGITTRTVKHHMG) is a DNA-binding region (H-T-H motif).

It belongs to the autoinducer-regulated transcriptional regulatory protein family.

Probable transcriptional activator. Binds to an autoinducer molecule. This chain is Transcriptional activator protein YukR (yukR), found in Yersinia ruckeri.